Here is a 444-residue protein sequence, read N- to C-terminus: CBL-interacting serine/threonine-protein kinase 1 (444 aa).

The 256-residue stretch at 20 to 275 (YELGRTLGEG…VVGIKASEWF (256 aa)) folds into the Protein kinase domain. ATP-binding positions include 26–34 (LGEGNFGKV) and Lys49. Residue Asp143 is the Proton acceptor of the active site. The tract at residues 161-190 (DFGLSALPQHFRDDGLLHTTCGSPNYVAPE) is activation loop. A Phosphoserine modification is found at Ser165. Residue Thr179 is modified to Phosphothreonine. The NAF domain maps to 313 to 337 (DSPTIINAFQLIGMSSFLDLSGFFE). The segment at 343–372 (ERRIRFTSNSSAKDLLEKIETAVTEMGFSV) is PPI.

The protein belongs to the protein kinase superfamily. CAMK Ser/Thr protein kinase family. SNF1 subfamily. In terms of assembly, interacts with CBL1. Interacts with CBL2. Interacts with CBL3. Interacts with CBL9. Interacts with ECT1 and ECT2. Mn(2+) serves as cofactor. Post-translationally, autophosphorylated. As to expression, ubiquitous.

The enzyme catalyses L-seryl-[protein] + ATP = O-phospho-L-seryl-[protein] + ADP + H(+). It carries out the reaction L-threonyl-[protein] + ATP = O-phospho-L-threonyl-[protein] + ADP + H(+). CIPK serine-threonine protein kinases interact with CBL proteins. Binding of a CBL protein to the regulatory NAF domain of CIPK protein lead to the activation of the kinase in a calcium-dependent manner. The sequence is that of CBL-interacting serine/threonine-protein kinase 1 (CIPK1) from Arabidopsis thaliana (Mouse-ear cress).